Here is a 359-residue protein sequence, read N- to C-terminus: Mitochondrial glutathione transporter SLC25A39 (359 aa).

The Mitochondrial intermembrane segment spans residues 1–18; it reads MGDRPAVRISAAITPVQQ. Solcar repeat units follow at residues 13–149, 157–241, and 251–346; these read ITPV…LRDF, HGDH…VKAQ, and ASFT…GKTF. The chain crosses the membrane as a helical span at residues 19 to 39; sequence MLASGTGAVLTSLFVTPLDVV. Over 40–119 the chain is Mitochondrial matrix; it reads KIRLQAQQTP…VKITHNEGLR (80 aa). The [2Fe-2S] cluster site is built by Cys72, Cys76, Cys86, and Cys92. The chain crosses the membrane as a helical span at residues 120–140; the sequence is SLWSGLPPTLVMAVPATVIYF. Residues 141–162 lie on the Mitochondrial intermembrane side of the membrane; it reads TCYDQLRDFLCYSMGYHGDHIP. Residues 163-183 traverse the membrane as a helical segment; sequence LIAGGLARLGAVSVISPLELV. The Mitochondrial matrix segment spans residues 184 to 212; it reads RTKMQSRRLQYSELMVCIRSSVAQDGWLS. Residues 213–233 traverse the membrane as a helical segment; the sequence is LWRGWGPTVLRDVPFSALYWF. Topologically, residues 234–253 are mitochondrial intermembrane; it reads NYELVKAQLCEHYRTPQASF. A helical transmembrane segment spans residues 254 to 274; it reads TISFTAGAVSGAIAAVLTLPF. The Mitochondrial matrix portion of the chain corresponds to 275 to 316; it reads DVVKTRRQIQLGEMEALGAVSMKKPSSTWNMMRNIWIDMGYK. A helical membrane pass occupies residues 317–337; it reads GLFAGFLPRVIKVAPACAVMI. Over 338-359 the chain is Mitochondrial intermembrane; that stretch reads STYEFGKTFFQERNLHQARCGL.

It belongs to the mitochondrial carrier (TC 2.A.29) family. Cleaved and degraded by AFG3L2; degradation by AFG3L2 is regulated by the ability of SLC25A39 to bind iron-sulfur. In absence of mitochondrial glutathione, SLC25A39 binds iron-sulfur, preventing cleavage and degradation by AFG3L2. The presence of mitochondrial glutathione prevents iron-sulfur-binding to SLC25A39, promoting cleavage and degradation by AFG3L2.

The protein localises to the mitochondrion inner membrane. It carries out the reaction glutathione(in) = glutathione(out). The activity of SLC25A39 is regulated by levels of mitochondrial glutathione via its ability to bind [2Fe-2S] iron-sulfur cluster. Upon physiological levels of mitochondrial glutathione, glutathione prevents iron-sulfur-binding to SLC25A39 promoting cleavage and degradation by AFG3L2. Upon depletion of mitochondrial glutathione, SLC25A39 binds iron-sulfur, preventing cleavage and degradation by AFG3L2. Mitochondrial transporter required for glutathione import into mitochondria. Glutathione, which plays key roles in oxidative metabolism, is produced exclusively in the cytosol and is imported in many organelles. Mitochondrial glutathione is required for the activity and stability of proteins containing iron-sulfur clusters, as well as erythropoiesis. Involved in the early steps of heme biosynthesis. The polypeptide is Mitochondrial glutathione transporter SLC25A39 (slc25a39) (Danio rerio (Zebrafish)).